The following is a 380-amino-acid chain: Growth-regulating factor 4 (380 aa).

Positions 1-21 are disordered; it reads MDLQLKQWRSQQQNESEEQGS. The 36-residue stretch at 82–117 folds into the QLQ domain; that stretch reads FFSWAQWQELELQALIYRYMLAGASVPQELLLPIKK. In terms of domain architecture, WRC spans 151–195; that stretch reads DPEPGRCKRTDGKKWRCSRDVVAGHKYCDRHIHRGRNRSRKPVET. Short sequence motifs (bipartite nuclear localization signal) lie at residues 156–166 and 184–191; these read RCKRTDGKKWR and RGRNRSRK. Disordered stretches follow at residues 222–270 and 284–330; these read NNNH…GRSD and RSSD…NMRN. 2 stretches are compositionally biased toward low complexity: residues 228 to 245 and 285 to 296; these read SSGS…SCSS and SSDSTSSPMSSS. Positions 297 to 320 are enriched in polar residues; sequence TCHLSISMPGNNTSSDVSLKLSTG.

It belongs to the GRF family. In terms of tissue distribution, strongly expressed in actively growing and developing tissues, such as roots, upper stems, and shoot tips containing the shoot apical meristem (SAM) and flower buds. Also expressed in mature flowers, but weakly expressed in mature stems and leaves.

It is found in the nucleus. Its function is as follows. Transcription activator that plays a role in the regulation of cell expansion in leaf and cotyledons tissues. Component of a network formed by miR396, the GRFs and their interacting factors (GIFs) acting in the regulation of meristem function, at least partially through the control of cell proliferation. The polypeptide is Growth-regulating factor 4 (GRF4) (Arabidopsis thaliana (Mouse-ear cress)).